A 432-amino-acid polypeptide reads, in one-letter code: Keratin, type I cytoskeletal 18-B (432 aa).

Over residues 1-21 (MSYSRSMYSSSSVVGGSPYRS) the composition is skewed to low complexity. The disordered stretch occupies residues 1 to 44 (MSYSRSMYSSSSVVGGSPYRSLSSAPRFAPGSSAASVHAGPGGS). The head stretch occupies residues 2-82 (SYSRSMYSSS…NVSLMGGAQN (81 aa)). Residues 83–118 (EKETMQDLNDRLASYLERVRSLETANKELEVQIRQH) are coil 1A. Residues 83 to 393 (EKETMQDLND…RLLEGDSFDL (311 aa)) form the IF rod domain. A linker 1 region spans residues 119–134 (TEKKGPAKDWSPYYKA). Residues 135-226 (IEDLKKQVFD…KNHQDDVNEL (92 aa)) are coil 1B. Residues 227-250 (QAQIARSAVTVEVDAPKSQDLGKI) are linker 12. Residues 251–388 (MAELRAQYDG…IHTYRRLLEG (138 aa)) form a coil 2 region. The interval 389–432 (DSFDLQDAVPTVTTQTVKKVITTTQRIVDGKVVAESNDTEVLKA) is tail.

Belongs to the intermediate filament family. In terms of assembly, heterotetramer of two type I and two type II keratins. Keratin-18 associates with keratin-8. Post-translationally, phosphorylated. In terms of processing, proteolytically cleaved by caspases during epithelial cell apoptosis.

Functionally, when phosphorylated, plays a role in filament reorganization. The sequence is that of Keratin, type I cytoskeletal 18-B (krt18-b) from Xenopus laevis (African clawed frog).